The primary structure comprises 156 residues: MPRKGPAPKRPLVKHPVYGSQLVTQLVNKILLKGKKSLAERIVYGALEHARDKTGTDPVITLKRALDNVKPALEVRSRRVGGATYQVPVEVRPDRSTTLALRWLVGFSRQRREKTMIERLANEILDASNGLGASVKRREDTHKMAEANRAFAHYRW.

It belongs to the universal ribosomal protein uS7 family. In terms of assembly, part of the 30S ribosomal subunit. Contacts proteins S9 and S11.

Functionally, one of the primary rRNA binding proteins, it binds directly to 16S rRNA where it nucleates assembly of the head domain of the 30S subunit. Is located at the subunit interface close to the decoding center, probably blocks exit of the E-site tRNA. This chain is Small ribosomal subunit protein uS7, found in Mycobacterium leprae (strain TN).